A 489-amino-acid chain; its full sequence is Cytochrome P450 71A26 (489 aa).

Residues 1–21 (MMIMFFLLCSIIFVVTIIIFR) traverse the membrane as a helical segment. Residue Cys-431 participates in heme binding.

Belongs to the cytochrome P450 family. Requires heme as cofactor.

The protein resides in the membrane. This is Cytochrome P450 71A26 (CYP71A26) from Arabidopsis thaliana (Mouse-ear cress).